Here is a 202-residue protein sequence, read N- to C-terminus: Protein-methionine-sulfoxide reductase heme-binding subunit MsrQ (202 aa).

6 helical membrane passes run 8-28 (LAVFLGALAVPAWWLYQAWIF), 42-62 (LGLGALVLLLLTLAMTPLQKL), 75-95 (LGLWCFTYVLLHLSAYCVFIL), 110-130 (PYIIVGMLGFICLFLLAITSN), 147-167 (LVYLILGLGLLHMLWVVRADL), and 169-189 (EWTLYAVVGASLMLLRLPSIA).

Belongs to the MsrQ family. Heterodimer of a catalytic subunit (MsrP) and a heme-binding subunit (MsrQ). FMN serves as cofactor. It depends on heme b as a cofactor.

The protein resides in the cell inner membrane. Functionally, part of the MsrPQ system that repairs oxidized periplasmic proteins containing methionine sulfoxide residues (Met-O), using respiratory chain electrons. Thus protects these proteins from oxidative-stress damage caused by reactive species of oxygen and chlorine generated by the host defense mechanisms. MsrPQ is essential for the maintenance of envelope integrity under bleach stress, rescuing a wide series of structurally unrelated periplasmic proteins from methionine oxidation. MsrQ provides electrons for reduction to the reductase catalytic subunit MsrP, using the quinone pool of the respiratory chain. This Pseudomonas aeruginosa (strain LESB58) protein is Protein-methionine-sulfoxide reductase heme-binding subunit MsrQ.